The following is a 405-amino-acid chain: L-carnitine CoA-transferase (405 aa).

The CoA site is built by Lys-97 and Arg-104. The active-site Nucleophile is Asp-169.

It belongs to the CoA-transferase III family. CaiB subfamily. Homodimer.

It is found in the cytoplasm. The catalysed reaction is crotonobetainyl-CoA + (R)-carnitine = crotonobetaine + (R)-carnitinyl-CoA. The enzyme catalyses 4-(trimethylamino)butanoyl-CoA + (R)-carnitine = (R)-carnitinyl-CoA + 4-(trimethylamino)butanoate. It functions in the pathway amine and polyamine metabolism; carnitine metabolism. Functionally, catalyzes the reversible transfer of the CoA moiety from gamma-butyrobetainyl-CoA to L-carnitine to generate L-carnitinyl-CoA and gamma-butyrobetaine. Is also able to catalyze the reversible transfer of the CoA moiety from gamma-butyrobetainyl-CoA or L-carnitinyl-CoA to crotonobetaine to generate crotonobetainyl-CoA. The sequence is that of L-carnitine CoA-transferase from Escherichia coli O7:K1 (strain IAI39 / ExPEC).